The primary structure comprises 222 residues: MTRISREMMKELLSVYFIMGSNNTKADPVTVVQKALKGGATLYQFREKGGDALTGEARIKFAEKAQAACREAGVPFIVNDDVELALNLKADGIHIGQEDANAKEVRAAIGDMILGVSAHTMSEVKQAEEDGADYVGLGPIYPTETKKDTRAVQGVSLIEAVRRQGISIPIVGIGGITIDNAAPVIQAGADGVSMISAISQAEDPESAARKFREEIQTYKTGR.

4-amino-2-methyl-5-(diphosphooxymethyl)pyrimidine is bound by residues 44–48 and asparagine 79; that span reads QFREK. Mg(2+) contacts are provided by aspartate 80 and aspartate 99. Serine 117 serves as a coordination point for 4-amino-2-methyl-5-(diphosphooxymethyl)pyrimidine. 143-145 provides a ligand contact to 2-[(2R,5Z)-2-carboxy-4-methylthiazol-5(2H)-ylidene]ethyl phosphate; sequence TET. Position 146 (lysine 146) interacts with 4-amino-2-methyl-5-(diphosphooxymethyl)pyrimidine. Residues glycine 175 and 195–196 contribute to the 2-[(2R,5Z)-2-carboxy-4-methylthiazol-5(2H)-ylidene]ethyl phosphate site; that span reads IS.

It belongs to the thiamine-phosphate synthase family. As to quaternary structure, monomer. Requires Mg(2+) as cofactor.

The catalysed reaction is 2-[(2R,5Z)-2-carboxy-4-methylthiazol-5(2H)-ylidene]ethyl phosphate + 4-amino-2-methyl-5-(diphosphooxymethyl)pyrimidine + 2 H(+) = thiamine phosphate + CO2 + diphosphate. The enzyme catalyses 2-(2-carboxy-4-methylthiazol-5-yl)ethyl phosphate + 4-amino-2-methyl-5-(diphosphooxymethyl)pyrimidine + 2 H(+) = thiamine phosphate + CO2 + diphosphate. It catalyses the reaction 4-methyl-5-(2-phosphooxyethyl)-thiazole + 4-amino-2-methyl-5-(diphosphooxymethyl)pyrimidine + H(+) = thiamine phosphate + diphosphate. It participates in cofactor biosynthesis; thiamine diphosphate biosynthesis; thiamine phosphate from 4-amino-2-methyl-5-diphosphomethylpyrimidine and 4-methyl-5-(2-phosphoethyl)-thiazole: step 1/1. Its function is as follows. Condenses 4-methyl-5-(beta-hydroxyethyl)thiazole monophosphate (THZ-P) and 2-methyl-4-amino-5-hydroxymethyl pyrimidine pyrophosphate (HMP-PP) to form thiamine monophosphate (TMP). Is also able to use the 2-methoxy analog MeO-HMP-PP, as substrate in vitro, but not the 2-trifluoromethyl analog CF(3)-HMP-PP. The polypeptide is Thiamine-phosphate synthase (thiE) (Bacillus subtilis (strain 168)).